The sequence spans 242 residues: Cysteine-rich venom protein VAR11 (242 aa).

A signal peptide spans 1 to 19 (MILLKLYLTLAAILCQSRG). The 129-residue stretch at 41–169 (NKHNDLRRTV…SLKYFQVCQY (129 aa)) folds into the SCP domain. 8 disulfides stabilise this stretch: C77–C156, C95–C170, C151–C167, C189–C196, C192–C201, C205–C237, C214–C231, and C223–C235. One can recognise a ShKT domain in the interval 205 to 237 (CAYNDDYTSCPDLTKQVGCNHPVTANCKASCQC).

Belongs to the CRISP family. In terms of tissue distribution, expressed by the venom gland.

It is found in the secreted. Its function is as follows. Blocks ryanodine receptors, and potassium channels. In Varanus varius (Lace monitor lizard), this protein is Cysteine-rich venom protein VAR11.